We begin with the raw amino-acid sequence, 140 residues long: Putative cell wall protein (140 aa).

The N-terminal stretch at 1 to 21 (MASSLITSAVIVVVLSLVLGS) is a signal peptide. The segment covering 85–98 (TGGGIPSYNGGQGA) has biased composition (gly residues). The disordered stretch occupies residues 85 to 140 (TGGGIPSYNGGQGAGPHTQLPGGDDTLVPNPGFEAPTPTIGAGTGSNGQVPPVPLP).

As to expression, inflorescence.

It is found in the secreted. The protein resides in the cell wall. The protein is Putative cell wall protein of Arabidopsis thaliana (Mouse-ear cress).